The chain runs to 243 residues: 1-(5-phosphoribosyl)-5-[(5-phosphoribosylamino)methylideneamino] imidazole-4-carboxamide isomerase (243 aa).

Asp8 acts as the Proton acceptor in catalysis. The active-site Proton donor is Asp130.

This sequence belongs to the HisA/HisF family.

The protein resides in the cytoplasm. It carries out the reaction 1-(5-phospho-beta-D-ribosyl)-5-[(5-phospho-beta-D-ribosylamino)methylideneamino]imidazole-4-carboxamide = 5-[(5-phospho-1-deoxy-D-ribulos-1-ylimino)methylamino]-1-(5-phospho-beta-D-ribosyl)imidazole-4-carboxamide. It functions in the pathway amino-acid biosynthesis; L-histidine biosynthesis; L-histidine from 5-phospho-alpha-D-ribose 1-diphosphate: step 4/9. The chain is 1-(5-phosphoribosyl)-5-[(5-phosphoribosylamino)methylideneamino] imidazole-4-carboxamide isomerase from Acinetobacter baumannii (strain AB307-0294).